A 319-amino-acid polypeptide reads, in one-letter code: Putative replication factor C small subunit R395 (319 aa).

Residue 45–52 (GSPGVGKT) coordinates ATP.

It belongs to the activator 1 small subunits family. RfcS subfamily.

Functionally, part of the RFC clamp loader complex which loads the PCNA sliding clamp onto DNA. In Acanthamoeba polyphaga mimivirus (APMV), this protein is Putative replication factor C small subunit R395.